Consider the following 206-residue polypeptide: MSPTQEQLIALGGVFQAAVLVDRIAKTGQISEAALSCMLGSLLVVDPKDTLDVYGGDDLNLHEGYRAMASALERDPATLQREPLRYALSMLGLERQLAKRDDLLEVIGKRIPVIQSQVEHFGIAHENVIAATGALYQDTLSTLRQRIQVQGDMRNLQQPNNASKIRGILLAGIRSARLWRQVGGHRWQLVFSRRKLLKELYPLLHG.

The protein belongs to the HflD family.

Its subcellular location is the cytoplasm. The protein localises to the cell inner membrane. This chain is High frequency lysogenization protein HflD homolog, found in Pseudomonas syringae pv. syringae (strain B728a).